Consider the following 155-residue polypeptide: Ribonuclease H (155 aa).

The RNase H type-1 domain occupies 4-146; that stretch reads NIDVVEIYTD…CDRLATEQIK (143 aa). Positions 13, 51, 73, and 138 each coordinate Mg(2+).

Belongs to the RNase H family. In terms of assembly, monomer. It depends on Mg(2+) as a cofactor.

Its subcellular location is the cytoplasm. The catalysed reaction is Endonucleolytic cleavage to 5'-phosphomonoester.. Functionally, endonuclease that specifically degrades the RNA of RNA-DNA hybrids. The protein is Ribonuclease H of Thermoanaerobacter pseudethanolicus (strain ATCC 33223 / 39E) (Clostridium thermohydrosulfuricum).